Reading from the N-terminus, the 973-residue chain is Valine--tRNA ligase (973 aa).

The 'HIGH' region signature appears at 57–67; it reads PNVTGSLHMGH. The 'KMSKS' region motif lies at 569-573; that stretch reads KMSKS. K572 contacts ATP. Positions 901 to 970 form a coiled coil; the sequence is MAGLIDKEAE…AKILEQKIQI (70 aa).

It belongs to the class-I aminoacyl-tRNA synthetase family. ValS type 1 subfamily. As to quaternary structure, monomer.

The protein resides in the cytoplasm. It carries out the reaction tRNA(Val) + L-valine + ATP = L-valyl-tRNA(Val) + AMP + diphosphate. Catalyzes the attachment of valine to tRNA(Val). As ValRS can inadvertently accommodate and process structurally similar amino acids such as threonine, to avoid such errors, it has a 'posttransfer' editing activity that hydrolyzes mischarged Thr-tRNA(Val) in a tRNA-dependent manner. This chain is Valine--tRNA ligase, found in Colwellia psychrerythraea (strain 34H / ATCC BAA-681) (Vibrio psychroerythus).